Reading from the N-terminus, the 161-residue chain is Bacterial E2-like ubiquitin protein BilB (161 aa).

The Glycyl thioester intermediate role is filled by Cys-113.

Component of the Bil (bacterial ISG15-like) antiviral defense system, composed of BilA, BilB, BilC and BilD. The Bil system specifically conjugates a ubiquitin-like moiety (bilA) to the bacteriophage central tail fiber (CTF, or tip attachment protein J) via reactions involving E1 (bilD) and E2 (bilB). Modifies CTF of phage SECphi27 and SECphi4, which probably interferes with assembly of the phage tail. Also modifies T5 baseplate hub protein pb3 (gene D16), but not gp27 of phage T6 (Bil defends against T6). BilB probably accepts ubiquitin from the BilA-BilD (E1) complex and catalyzes its covalent attachment to target protein (CTF). Bil-encoding bacteria produce mostly defective phage SECphi27, many of which have phage assembly defects, including no tails. SECphi27 phage progeny produced in E.coli with the Bil system inject less DNA into naive host cells, maybe because the phage are less able to adsorb and inject their DNA into host cells. In terms of biological role, expression of the Bil system in E.coli (strain MG1655) confers about 100-fold resistance to phage SECphi27, SECphi18, SECphi6, SECphi4 and T5, but not to SECphi17. When cells expressing the Bil system are infected by phage SECphi27 at low multiplicity of infection (0.03 MOI) the culture survives, at 3.0 MOI the culture collapses at the same time as cells without the Bil system. The protein is Bacterial E2-like ubiquitin protein BilB of Collimonas sp. (strain OK412).